A 178-amino-acid chain; its full sequence is Inorganic pyrophosphatase (178 aa).

Substrate is bound by residues lysine 30, arginine 44, and tyrosine 56. Positions 66, 71, and 103 each coordinate Mg(2+). Tyrosine 142 is a substrate binding site.

The protein belongs to the PPase family. In terms of assembly, homohexamer. Mg(2+) serves as cofactor.

It is found in the cytoplasm. The catalysed reaction is diphosphate + H2O = 2 phosphate + H(+). Functionally, catalyzes the hydrolysis of inorganic pyrophosphate (PPi) forming two phosphate ions. This chain is Inorganic pyrophosphatase, found in Xanthomonas campestris pv. campestris (strain ATCC 33913 / DSM 3586 / NCPPB 528 / LMG 568 / P 25).